The sequence spans 102 residues: Putative pterin-4-alpha-carbinolamine dehydratase (102 aa).

Belongs to the pterin-4-alpha-carbinolamine dehydratase family.

The enzyme catalyses (4aS,6R)-4a-hydroxy-L-erythro-5,6,7,8-tetrahydrobiopterin = (6R)-L-erythro-6,7-dihydrobiopterin + H2O. The sequence is that of Putative pterin-4-alpha-carbinolamine dehydratase from Burkholderia cenocepacia (strain HI2424).